A 117-amino-acid polypeptide reads, in one-letter code: Large ribosomal subunit protein uL18 (117 aa).

This sequence belongs to the universal ribosomal protein uL18 family. In terms of assembly, part of the 50S ribosomal subunit; part of the 5S rRNA/L5/L18/L25 subcomplex. Contacts the 5S and 23S rRNAs.

Its function is as follows. This is one of the proteins that bind and probably mediate the attachment of the 5S RNA into the large ribosomal subunit, where it forms part of the central protuberance. The sequence is that of Large ribosomal subunit protein uL18 from Aliivibrio fischeri (strain ATCC 700601 / ES114) (Vibrio fischeri).